The primary structure comprises 203 residues: Pyridoxine/pyridoxamine 5'-phosphate oxidase (203 aa).

FMN contacts are provided by residues 50–55 (RMVLLK), 65–66 (YT), Lys-71, Lys-72, and Gln-94. Position 55 (Lys-55) interacts with substrate. Tyr-112, Arg-116, and Ser-120 together coordinate substrate. Residues 129–130 (QS) and Trp-174 each bind FMN. 180–182 (RLH) provides a ligand contact to substrate. Arg-184 contacts FMN.

It belongs to the pyridoxamine 5'-phosphate oxidase family. Homodimer. FMN is required as a cofactor.

The enzyme catalyses pyridoxamine 5'-phosphate + O2 + H2O = pyridoxal 5'-phosphate + H2O2 + NH4(+). The catalysed reaction is pyridoxine 5'-phosphate + O2 = pyridoxal 5'-phosphate + H2O2. The protein operates within cofactor metabolism; pyridoxal 5'-phosphate salvage; pyridoxal 5'-phosphate from pyridoxamine 5'-phosphate: step 1/1. It functions in the pathway cofactor metabolism; pyridoxal 5'-phosphate salvage; pyridoxal 5'-phosphate from pyridoxine 5'-phosphate: step 1/1. Functionally, catalyzes the oxidation of either pyridoxine 5'-phosphate (PNP) or pyridoxamine 5'-phosphate (PMP) into pyridoxal 5'-phosphate (PLP). This is Pyridoxine/pyridoxamine 5'-phosphate oxidase from Brucella canis (strain ATCC 23365 / NCTC 10854 / RM-666).